We begin with the raw amino-acid sequence, 404 residues long: Spore development regulator RYP2 (404 aa).

Disordered regions lie at residues 1 to 46 (MSAP…RKAV), 200 to 231 (LLKR…SSQQ), and 382 to 404 (SGQS…PAWG). Residues 17 to 194 (LQSADFRLTV…ADQGVKLRIR (178 aa)) enclose the Velvet domain. Over residues 29–46 (NPERARVAGGKEKERKAV) the composition is skewed to basic and acidic residues. Residues 382–397 (SGQSFSQSAGHMQSPS) are compositionally biased toward polar residues.

Belongs to the velvet family. VosA subfamily. In terms of assembly, forms a heterodimeric complex with RYP3; the formation of the RYP2-RYP3 complex is light-dependent.

The protein resides in the nucleus. In terms of biological role, component of the RYP2-RYP3 heterodimeric complex that plays a dual role in activating genes associated with spore maturation and repressing certain development-associated genes. The complex binds DNA through the DNA-binding domain of vosA that recognizes an 11-nucleotide consensus sequence 5'-CTGGCCGCGGC-3' consisting of two motifs in the promoters of key developmental regulatory genes. Required for viable spore production and regulation of sporulation in response to temperature and for the switch to yeast-form in the presence of host cells. The sequence is that of Spore development regulator RYP2 from Ajellomyces capsulatus (Darling's disease fungus).